The primary structure comprises 159 residues: Cyclic pyranopterin monophosphate synthase (159 aa).

Substrate-binding positions include 76–78 (MCH) and 114–115 (ME). D129 is an active-site residue.

It belongs to the MoaC family. As to quaternary structure, homohexamer; trimer of dimers.

It catalyses the reaction (8S)-3',8-cyclo-7,8-dihydroguanosine 5'-triphosphate = cyclic pyranopterin phosphate + diphosphate. Its pathway is cofactor biosynthesis; molybdopterin biosynthesis. In terms of biological role, catalyzes the conversion of (8S)-3',8-cyclo-7,8-dihydroguanosine 5'-triphosphate to cyclic pyranopterin monophosphate (cPMP). The protein is Cyclic pyranopterin monophosphate synthase of Natranaerobius thermophilus (strain ATCC BAA-1301 / DSM 18059 / JW/NM-WN-LF).